Here is a 262-residue protein sequence, read N- to C-terminus: Phosphonates import ATP-binding protein PhnC (262 aa).

In terms of domain architecture, ABC transporter spans 5–253 (IRVEKLAKTF…RFDHLYRSIN (249 aa)). 37-44 (GPSGSGKS) contacts ATP.

This sequence belongs to the ABC transporter superfamily. Phosphonates importer (TC 3.A.1.9.1) family. As to quaternary structure, the complex is composed of two ATP-binding proteins (PhnC), two transmembrane proteins (PhnE) and a solute-binding protein (PhnD).

Its subcellular location is the cell inner membrane. It catalyses the reaction phosphonate(out) + ATP + H2O = phosphonate(in) + ADP + phosphate + H(+). In terms of biological role, part of the ABC transporter complex PhnCDE involved in phosphonates, phosphate esters, phosphite and phosphate import. Responsible for energy coupling to the transport system. The chain is Phosphonates import ATP-binding protein PhnC from Escherichia coli (strain K12).